We begin with the raw amino-acid sequence, 559 residues long: CTP synthase (559 aa).

The segment at 1–270 (MTKFVFVTGG…DGLICDKLRL (270 aa)) is amidoligase domain. Serine 13 serves as a coordination point for CTP. Serine 13 is a binding site for UTP. ATP-binding positions include 14-19 (SLGKGI) and aspartate 71. Mg(2+) is bound by residues aspartate 71 and glutamate 144. CTP-binding positions include 151 to 153 (DIE), 191 to 196 (KTKPTQ), and lysine 227. UTP-binding positions include 191–196 (KTKPTQ) and lysine 227. The region spanning 295 to 548 (TIAMVGKYVD…IKAAIDHQKS (254 aa)) is the Glutamine amidotransferase type-1 domain. Residue glycine 357 participates in L-glutamine binding. Cysteine 384 acts as the Nucleophile; for glutamine hydrolysis in catalysis. Residues 385-388 (LGMQ), glutamate 408, and arginine 474 each bind L-glutamine. Residues histidine 521 and glutamate 523 contribute to the active site.

It belongs to the CTP synthase family. As to quaternary structure, homotetramer.

The catalysed reaction is UTP + L-glutamine + ATP + H2O = CTP + L-glutamate + ADP + phosphate + 2 H(+). It carries out the reaction L-glutamine + H2O = L-glutamate + NH4(+). It catalyses the reaction UTP + NH4(+) + ATP = CTP + ADP + phosphate + 2 H(+). It participates in pyrimidine metabolism; CTP biosynthesis via de novo pathway; CTP from UDP: step 2/2. With respect to regulation, allosterically activated by GTP, when glutamine is the substrate; GTP has no effect on the reaction when ammonia is the substrate. The allosteric effector GTP functions by stabilizing the protein conformation that binds the tetrahedral intermediate(s) formed during glutamine hydrolysis. Inhibited by the product CTP, via allosteric rather than competitive inhibition. Catalyzes the ATP-dependent amination of UTP to CTP with either L-glutamine or ammonia as the source of nitrogen. Regulates intracellular CTP levels through interactions with the four ribonucleotide triphosphates. The protein is CTP synthase of Paracidovorax citrulli (strain AAC00-1) (Acidovorax citrulli).